A 278-amino-acid polypeptide reads, in one-letter code: 2-dehydro-3-deoxyphosphooctonate aldolase (278 aa).

The protein belongs to the KdsA family.

It is found in the cytoplasm. It catalyses the reaction D-arabinose 5-phosphate + phosphoenolpyruvate + H2O = 3-deoxy-alpha-D-manno-2-octulosonate-8-phosphate + phosphate. It functions in the pathway carbohydrate biosynthesis; 3-deoxy-D-manno-octulosonate biosynthesis; 3-deoxy-D-manno-octulosonate from D-ribulose 5-phosphate: step 2/3. The protein operates within bacterial outer membrane biogenesis; lipopolysaccharide biosynthesis. This Fusobacterium nucleatum subsp. nucleatum (strain ATCC 25586 / DSM 15643 / BCRC 10681 / CIP 101130 / JCM 8532 / KCTC 2640 / LMG 13131 / VPI 4355) protein is 2-dehydro-3-deoxyphosphooctonate aldolase.